The sequence spans 231 residues: Biosynthetic peptidoglycan transglycosylase (231 aa).

A helical membrane pass occupies residues 12-34 (AAVLAGLALLLVALAVSYRWVPP).

Belongs to the glycosyltransferase 51 family.

It is found in the cell inner membrane. The catalysed reaction is [GlcNAc-(1-&gt;4)-Mur2Ac(oyl-L-Ala-gamma-D-Glu-L-Lys-D-Ala-D-Ala)](n)-di-trans,octa-cis-undecaprenyl diphosphate + beta-D-GlcNAc-(1-&gt;4)-Mur2Ac(oyl-L-Ala-gamma-D-Glu-L-Lys-D-Ala-D-Ala)-di-trans,octa-cis-undecaprenyl diphosphate = [GlcNAc-(1-&gt;4)-Mur2Ac(oyl-L-Ala-gamma-D-Glu-L-Lys-D-Ala-D-Ala)](n+1)-di-trans,octa-cis-undecaprenyl diphosphate + di-trans,octa-cis-undecaprenyl diphosphate + H(+). It participates in cell wall biogenesis; peptidoglycan biosynthesis. In terms of biological role, peptidoglycan polymerase that catalyzes glycan chain elongation from lipid-linked precursors. This Rhodospirillum centenum (strain ATCC 51521 / SW) protein is Biosynthetic peptidoglycan transglycosylase.